Reading from the N-terminus, the 430-residue chain is Enolase (430 aa).

Gln167 is a (2R)-2-phosphoglycerate binding site. The active-site Proton donor is the Glu209. The Mg(2+) site is built by Asp245, Glu286, and Asp313. (2R)-2-phosphoglycerate contacts are provided by Lys338, Arg367, Ser368, and Lys389. The Proton acceptor role is filled by Lys338.

The protein belongs to the enolase family. Requires Mg(2+) as cofactor.

It is found in the cytoplasm. The protein resides in the secreted. The protein localises to the cell surface. The catalysed reaction is (2R)-2-phosphoglycerate = phosphoenolpyruvate + H2O. It functions in the pathway carbohydrate degradation; glycolysis; pyruvate from D-glyceraldehyde 3-phosphate: step 4/5. In terms of biological role, catalyzes the reversible conversion of 2-phosphoglycerate (2-PG) into phosphoenolpyruvate (PEP). It is essential for the degradation of carbohydrates via glycolysis. The sequence is that of Enolase from Synechococcus sp. (strain CC9605).